The chain runs to 859 residues: Bifunctional uridylyltransferase/uridylyl-removing enzyme (859 aa).

Residues 1–325 (MSAHAAPSPE…PATSGITRVL (325 aa)) form a uridylyltransferase region. A uridylyl-removing region spans residues 326-682 (SHDRFVEKQG…ARPSPIGDAL (357 aa)). The HD domain maps to 444–566 (VDQHILMVLR…VGNERYLTAL (123 aa)). 2 consecutive ACT domains span residues 683–762 (QVLV…PEPS) and 791–859 (ILSV…AIAV).

This sequence belongs to the GlnD family. It depends on Mg(2+) as a cofactor.

It catalyses the reaction [protein-PII]-L-tyrosine + UTP = [protein-PII]-uridylyl-L-tyrosine + diphosphate. The catalysed reaction is [protein-PII]-uridylyl-L-tyrosine + H2O = [protein-PII]-L-tyrosine + UMP + H(+). Its activity is regulated as follows. Uridylyltransferase (UTase) activity is inhibited by glutamine, while glutamine activates uridylyl-removing (UR) activity. In terms of biological role, modifies, by uridylylation and deuridylylation, the PII regulatory proteins (GlnB and homologs), in response to the nitrogen status of the cell that GlnD senses through the glutamine level. Under low glutamine levels, catalyzes the conversion of the PII proteins and UTP to PII-UMP and PPi, while under higher glutamine levels, GlnD hydrolyzes PII-UMP to PII and UMP (deuridylylation). Thus, controls uridylylation state and activity of the PII proteins, and plays an important role in the regulation of nitrogen fixation and metabolism. The chain is Bifunctional uridylyltransferase/uridylyl-removing enzyme from Burkholderia vietnamiensis (strain G4 / LMG 22486) (Burkholderia cepacia (strain R1808)).